A 461-amino-acid polypeptide reads, in one-letter code: Phosphomethylpyrimidine synthase (461 aa).

Residues Asn80, Met109, Tyr139, His175, 195-197, 236-239, and Glu275 each bind substrate; these read SRG and DSLR. Residue His279 participates in Zn(2+) binding. Tyr302 contributes to the substrate binding site. His343 provides a ligand contact to Zn(2+). [4Fe-4S] cluster-binding residues include Cys423, Cys426, and Cys431.

Belongs to the ThiC family. The cofactor is [4Fe-4S] cluster.

The enzyme catalyses 5-amino-1-(5-phospho-beta-D-ribosyl)imidazole + S-adenosyl-L-methionine = 4-amino-2-methyl-5-(phosphooxymethyl)pyrimidine + CO + 5'-deoxyadenosine + formate + L-methionine + 3 H(+). Its pathway is cofactor biosynthesis; thiamine diphosphate biosynthesis. In terms of biological role, catalyzes the synthesis of the hydroxymethylpyrimidine phosphate (HMP-P) moiety of thiamine from aminoimidazole ribotide (AIR) in a radical S-adenosyl-L-methionine (SAM)-dependent reaction. This chain is Phosphomethylpyrimidine synthase, found in Picosynechococcus sp. (strain ATCC 27264 / PCC 7002 / PR-6) (Agmenellum quadruplicatum).